The sequence spans 283 residues: Ribosomal RNA small subunit methyltransferase I (283 aa).

This sequence belongs to the methyltransferase superfamily. RsmI family.

It is found in the cytoplasm. It catalyses the reaction cytidine(1402) in 16S rRNA + S-adenosyl-L-methionine = 2'-O-methylcytidine(1402) in 16S rRNA + S-adenosyl-L-homocysteine + H(+). In terms of biological role, catalyzes the 2'-O-methylation of the ribose of cytidine 1402 (C1402) in 16S rRNA. In Haemophilus influenzae (strain ATCC 51907 / DSM 11121 / KW20 / Rd), this protein is Ribosomal RNA small subunit methyltransferase I.